Here is a 70-residue protein sequence, read N- to C-terminus: Metallothionein-like protein 1 (70 aa).

Belongs to the metallothionein superfamily. Type 15 family.

Metallothioneins have a high content of cysteine residues that bind various heavy metals. This Festuca rubra (Red fescue) protein is Metallothionein-like protein 1 (MT1).